Here is a 530-residue protein sequence, read N- to C-terminus: Cytochrome P450 2U1 (530 aa).

Helical transmembrane passes span 21-41, 99-119, 247-267, and 328-348; these read VRAT…GWVW, VYGN…LSDF, ICLH…YLPF, and LFYI…NSLL. C476 lines the heme pocket. Residues 481 to 501 form a helical membrane-spanning segment; that stretch reads LAKMELFLMFVSLMQTFTFAL.

The protein belongs to the cytochrome P450 family. Requires heme as cofactor. In terms of tissue distribution, widely expressed. Expressed in heart, brain and liver.

The protein localises to the endoplasmic reticulum membrane. Its subcellular location is the microsome membrane. It localises to the mitochondrion inner membrane. The enzyme catalyses an omega-methyl-long-chain fatty acid + reduced [NADPH--hemoprotein reductase] + O2 = an omega-hydroxy-long-chain fatty acid + oxidized [NADPH--hemoprotein reductase] + H2O + H(+). It catalyses the reaction (5Z,8Z,11Z,14Z)-eicosatetraenoate + reduced [NADPH--hemoprotein reductase] + O2 = 19-hydroxy-(5Z,8Z,11Z,14Z)-eicosatetraenoate + oxidized [NADPH--hemoprotein reductase] + H2O + H(+). It carries out the reaction (5Z,8Z,11Z,14Z)-eicosatetraenoate + reduced [NADPH--hemoprotein reductase] + O2 = 20-hydroxy-(5Z,8Z,11Z,14Z)-eicosatetraenoate + oxidized [NADPH--hemoprotein reductase] + H2O + H(+). The catalysed reaction is N-[(5Z,8Z,11Z,14Z)-eicosatetraenoyl]-serotonin + reduced [NADPH--hemoprotein reductase] + O2 = 2-oxo-N-[(5Z,8Z,11Z,14Z)-eicosatetraenoyl]-serotonin + oxidized [NADPH--hemoprotein reductase] + H2O + H(+). A cytochrome P450 monooxygenase involved in the metabolism of arachidonic acid and its conjugates. Mechanistically, uses molecular oxygen inserting one oxygen atom into a substrate, and reducing the second into a water molecule, with two electrons provided by NADPH via cytochrome P450 reductase (CPR; NADPH-ferrihemoprotein reductase). Acts as an omega and omega-1 hydroxylase for arachidonic acid and possibly for other long chain fatty acids. May modulate the arachidonic acid signaling pathway and play a role in other fatty acid signaling processes. May down-regulate the biological activities of N-arachidonoyl-serotonin, an endocannabinoid that has anti-nociceptive effects through inhibition of fatty acid amide hydrolase FAAH, TRPV1 receptor and T-type calcium channels. Catalyzes C-2 oxidation of the indole ring of N-arachidonoyl-serotonin forming a less active product 2-oxo-N-arachidonoyl-serotonin. This is Cytochrome P450 2U1 from Mus musculus (Mouse).